The primary structure comprises 379 residues: Cytochrome b (379 aa).

The next 4 membrane-spanning stretches (helical) occupy residues 34–54 (FGSL…LLAT), 78–99 (WLIR…YLHI), 114–134 (WNIG…GYVL), and 179–199 (FFAL…IHLT). Positions 84 and 98 each coordinate heme b. Residues His183 and His197 each contribute to the heme b site. His202 contributes to the a ubiquinone binding site. A run of 4 helical transmembrane segments spans residues 227–247 (TKDM…AFFF), 289–309 (LGGV…PLLH), 321–341 (MSQL…WIGS), and 348–368 (FIII…FLFP).

This sequence belongs to the cytochrome b family. The cytochrome bc1 complex contains 11 subunits: 3 respiratory subunits (MT-CYB, CYC1 and UQCRFS1), 2 core proteins (UQCRC1 and UQCRC2) and 6 low-molecular weight proteins (UQCRH/QCR6, UQCRB/QCR7, UQCRQ/QCR8, UQCR10/QCR9, UQCR11/QCR10 and a cleavage product of UQCRFS1). This cytochrome bc1 complex then forms a dimer. Heme b is required as a cofactor.

It is found in the mitochondrion inner membrane. Component of the ubiquinol-cytochrome c reductase complex (complex III or cytochrome b-c1 complex) that is part of the mitochondrial respiratory chain. The b-c1 complex mediates electron transfer from ubiquinol to cytochrome c. Contributes to the generation of a proton gradient across the mitochondrial membrane that is then used for ATP synthesis. In Tinamus major (Great tinamou), this protein is Cytochrome b (MT-CYB).